The primary structure comprises 129 residues: Large ribosomal subunit protein bL12 (129 aa).

Basic and acidic residues predominate over residues 95 to 123; it reads MVESTPKSIKEGVSKEDAEEAKKSLEDAG. Positions 95-129 are disordered; sequence MVESTPKSIKEGVSKEDAEEAKKSLEDAGGKASLK.

The protein belongs to the bacterial ribosomal protein bL12 family. Homodimer. Part of the ribosomal stalk of the 50S ribosomal subunit. Forms a multimeric L10(L12)X complex, where L10 forms an elongated spine to which 2 to 4 L12 dimers bind in a sequential fashion. Binds GTP-bound translation factors.

Functionally, forms part of the ribosomal stalk which helps the ribosome interact with GTP-bound translation factors. Is thus essential for accurate translation. In Acaryochloris marina (strain MBIC 11017), this protein is Large ribosomal subunit protein bL12.